Here is a 73-residue protein sequence, read N- to C-terminus: Conotoxin CnIIIE (73 aa).

An N-terminal signal peptide occupies residues 1 to 19 (MSKLGVLLTICLLLFPLTA). Residues 20–49 (LPMDGDQSVDRPAERMQDDISSEQYPLFNQ) constitute a propeptide that is removed on maturation. Disulfide bonds link cysteine 53-cysteine 72, cysteine 54-cysteine 70, and cysteine 60-cysteine 73.

It belongs to the conotoxin M superfamily. In terms of tissue distribution, expressed by the venom duct.

The protein localises to the secreted. Its function is as follows. Shows a paralytic effect in fish. The polypeptide is Conotoxin CnIIIE (Conus consors (Singed cone)).